The primary structure comprises 409 residues: Nucleoprotein (409 aa).

Disordered stretches follow at residues 1–32, 44–69, 121–145, 164–195, and 238–259; these read MASG…SSGN, LNSP…QQHG, ADVK…LRFS, RSGR…SEGD, and VDQV…DKMN. The span at 15–31 shows a compositional bias: low complexity; sequence PVIKLGGPKPPKVGSSG. Positions 29-160 are RNA-binding; it reads SSGNASWFQA…GNFRWDFIPL (132 aa). The 126-residue stretch at 31–156 folds into the CoV N NTD domain; sequence GNASWFQAIK…GGPDGNFRWD (126 aa). Low complexity predominate over residues 164–179; sequence RSGRSTAASSAASSRA. Basic and acidic residues-rich tracts occupy residues 180-192 and 247-259; these read PSRD…RSGS and KGKE…DKMN. Phosphoserine; by host is present on residues Ser190 and Ser192. The region spanning 215–331 is the CoV N CTD domain; the sequence is TKAKADEMAH…QCVDGVGTRP (117 aa). Positions 226–333 are dimerization; the sequence is RYCKRTIPPG…VDGVGTRPKD (108 aa). Cys320 and Cys323 form a disulfide bridge. The disordered stretch occupies residues 326–409; sequence GVGTRPKDDE…GDSALGENEL (84 aa). The span at 341 to 358 shows a compositional bias: low complexity; that stretch reads RSSSRPATRTSSPALRQQ. Over residues 368 to 384 the composition is skewed to basic and acidic residues; that stretch reads KQDDEVDKALTSDEERN. Phosphothreonine; by host is present on Thr378. Phosphoserine; by host is present on Ser379.

Belongs to the gammacoronavirus nucleocapsid protein family. In terms of assembly, homooligomer. Both monomeric and oligomeric forms interact with RNA. Interacts with protein M. Interacts with NSP3; this interaction serves to tether the genome to the newly translated replicase-transcriptase complex at a very early stage of infection. Post-translationally, ADP-ribosylated. The ADP-ribosylation is retained in the virion during infection. Phosphorylated on serine and threonine residues.

The protein localises to the virion. Its subcellular location is the host endoplasmic reticulum-Golgi intermediate compartment. The protein resides in the host Golgi apparatus. Its function is as follows. Packages the positive strand viral genome RNA into a helical ribonucleocapsid (RNP) and plays a fundamental role during virion assembly through its interactions with the viral genome and membrane protein M. Plays an important role in enhancing the efficiency of subgenomic viral RNA transcription as well as viral replication. This chain is Nucleoprotein, found in Gallus gallus (Chicken).